Reading from the N-terminus, the 177-residue chain is Ribosome maturation factor RimM (177 aa).

A PRC barrel domain is found at 100 to 177; sequence EDEYYWSDLV…TVLVAWPSDY (78 aa).

It belongs to the RimM family. As to quaternary structure, binds ribosomal protein uS19.

The protein resides in the cytoplasm. An accessory protein needed during the final step in the assembly of 30S ribosomal subunit, possibly for assembly of the head region. Essential for efficient processing of 16S rRNA. May be needed both before and after RbfA during the maturation of 16S rRNA. It has affinity for free ribosomal 30S subunits but not for 70S ribosomes. The chain is Ribosome maturation factor RimM from Psychrobacter cryohalolentis (strain ATCC BAA-1226 / DSM 17306 / VKM B-2378 / K5).